Consider the following 363-residue polypeptide: G-protein coupled receptor 78 (363 aa).

Residues 1 to 7 (MGPGEAL) lie on the Extracellular side of the membrane. A helical transmembrane segment spans residues 8–28 (LAGLLVMVLAVALLSNALVLL). The Cytoplasmic portion of the chain corresponds to 29–47 (CCAYSAELRTRASGVLLVN). A helical transmembrane segment spans residues 48–68 (LSLGHLLLAALDMPFTLLGVM). Over 69 to 80 (RGRTPSAPGACQ) the chain is Extracellular. Cysteine 79 and cysteine 156 are disulfide-bonded. The helical transmembrane segment at 81–101 (VIGFLDTFLASNAALSVAALS) threads the bilayer. The Cytoplasmic segment spans residues 102–122 (ADQWLAVGFPLRYAGRLRPRY). Residues 123 to 143 (AGLLLGCAWGQSLAFSGAALG) traverse the membrane as a helical segment. Topologically, residues 144–168 (CSWLGYSSAFASCSLRLPPEPERPR) are extracellular. Residues 169-189 (FAAFTATLHAVGFVLPLAVLC) form a helical membrane-spanning segment. At 190 to 242 (LTSLQVHRVARRHCQRMDTVTMKALALLADLHPSVRQRCLIQQKRRRHRATRK) the chain is on the cytoplasmic side. A helical transmembrane segment spans residues 243–263 (IGIAIATFLICFAPYVMTRLA). The Extracellular portion of the chain corresponds to 264-277 (ELVPFVTVNAQWGI). The helical transmembrane segment at 278-297 (LSKCLTYSKAVADPFTYSLL) threads the bilayer. Residues 298-363 (RRPFRQVLAG…ENDSCLQQTH (66 aa)) lie on the Cytoplasmic side of the membrane. Residues 340–363 (TPRPASTHNGSVDTENDSCLQQTH) are disordered. The segment covering 343-363 (PASTHNGSVDTENDSCLQQTH) has biased composition (polar residues).

It belongs to the G-protein coupled receptor 1 family. As to expression, high level of expression in placenta. Expressed throughout the brain at low level. No expression detected in skeletal muscle, lung, heart, liver, pancreas, or kidney.

It is found in the cell membrane. Orphan receptor. Displays a significant level of constitutive activity. Its effect is mediated by G(s)-alpha protein that stimulate adenylate cyclase, resulting in an elevation of intracellular cAMP. This Homo sapiens (Human) protein is G-protein coupled receptor 78 (GPR78).